A 296-amino-acid chain; its full sequence is Ribosomal RNA small subunit methyltransferase A (296 aa).

S-adenosyl-L-methionine-binding residues include Asn-30, Leu-32, Gly-57, Glu-78, Asp-103, and Asn-128.

Belongs to the class I-like SAM-binding methyltransferase superfamily. rRNA adenine N(6)-methyltransferase family. RsmA subfamily.

Its subcellular location is the cytoplasm. The enzyme catalyses adenosine(1518)/adenosine(1519) in 16S rRNA + 4 S-adenosyl-L-methionine = N(6)-dimethyladenosine(1518)/N(6)-dimethyladenosine(1519) in 16S rRNA + 4 S-adenosyl-L-homocysteine + 4 H(+). Specifically dimethylates two adjacent adenosines (A1518 and A1519) in the loop of a conserved hairpin near the 3'-end of 16S rRNA in the 30S particle. May play a critical role in biogenesis of 30S subunits. This chain is Ribosomal RNA small subunit methyltransferase A, found in Macrococcus caseolyticus (strain JCSC5402) (Macrococcoides caseolyticum).